The sequence spans 1361 residues: MASASQFLLEDQTDEDFFDKLVDDAYSPTEAQASSSVTELKFDDESDSDDIRAFSNLSIGKDPLGGGDGTLNEAILGNDVANEGASGSVGEDEPSSIAPEAVQFPHSDARELRDDEMRSEVADMPLSETAKECTIVNEPGIPGVKELDWGSFDADLSVNDGRGFGSYSDFFTELDATAGNLQGKADVAVATGGNLVANDTNNTSVGFEQHQGQLHHDSASGQYVDNSQSWENLYPGWKYDASTGQWFQVDGHDASMNSQESYENSTSNWENVAANNSDVAYQRQSTASAVAGTVENVSTWNQVSQVSNGYPEHMVFDSQYPGWYYDTIAQEWRSLDSYNQAFQTTGQANDQQVQNGNSFTAVDHSRESNVHDVYDKNQILRTQKFDIQSQHGSWDQSYYDKNQQATNMWQPENAGAAEAAVTPASLSNSGGNQQVNNLYSTGPVAEQFKPYESGVQSFIPQHMNVANVTQNGPMSFSNGFYSRQESVDDAPQSFQSSQLFSPSAGRSSDGRPPHALVNFGFGGKLILMKDDSGSLQNSSFGSQKGTGGSSISVLNLAEVISGSASYSSLGENSLSYFSCLDQQSLPGPLVGGNVGSKDLHKWLDERILNCESSYMDFSRGKLLKMLLSLLRISCQYYGKLRSPFGSDALQKETDSAEAAVAKLFAIAKEDGVQNGYAPISQCLQHLPPESQMQVTASEVQNLLASGRKMEALQCAQEGHLWGPALVIAAQLGQQFYVDTVKQMALRQLVPGSPLRTLCLLVAGQPAEVFSTGSTSDISFPGSVNLPPQQPQFGCSSMLDSWEENLGIITANRTTDDELVITHLGDCMWKERGEIIAAHICYLIADKNFDTYSDTARLCLVGADHWKYPRTYASPEAIQRTELYEYSKTLGNSQYTLLTFQPYKVMYAHMLAEVGKLSTAQKYCQAVLKCLKTGRSPEVEMWKQFVSSLEERIRIHQQGGYTANLHPEKLVGVLLNFFGSKTHRPVGGMPPPAPHSTKGNLQGNEYQHQQQEATKLAYSQSVNTMSSLMPPASVEPTHESGGSGRRMAVHTRSVSEPDFGRTPIQEMADSSKEKAVDGVTKLKSSGSVAGSRFSRFGFGIFKDTVGRVLARSSKEAKLGAENQFYYDDKLKRWVERGVEPPAEEAALPPPPTIGAFQNNSLGYENKSDMIPSNGNWSSGGPTPSENSSGIPPISHGSNQFSARGRTGVRARYVDTYNPPGRGNSHTMIPSPSVQTAKPPIPAKAKFFVPAAPASFSNDQAMEPAAAETRQEEISADEVVASSGAPPPMMMQRYPSMDNIQRNGLGISVNGDNHQPPTSRRTASWSGNFNTSFTPPTSPSTFKPVLLNSSSSSLGEELQEVEL.

The residue at position 46 (S46) is a Phosphoserine. Disordered stretches follow at residues N82–A109, V487–P513, P984–T1013, S1025–P1062, E1163–R1204, N1216–A1235, and S1306–L1361. The segment covering P491 to S503 has biased composition (low complexity). Residues T996 to T1013 show a composition bias toward polar residues. 3 stretches are compositionally biased toward polar residues: residues I1169 to S1200, N1222 to T1234, and N1308 to G1325. The span at N1326–E1354 shows a compositional bias: low complexity.

The protein belongs to the SEC16 family.

It is found in the golgi apparatus. The protein resides in the endoplasmic reticulum. In terms of biological role, required for protein transport from the endoplasmic reticulum to the Golgi apparatus. The sequence is that of Protein transport protein SEC16B homolog from Arabidopsis thaliana (Mouse-ear cress).